The chain runs to 323 residues: tRNA U34 carboxymethyltransferase (323 aa).

Residues Lys-91, Trp-105, Lys-110, Gly-130, 152 to 154, 181 to 182, Met-196, Tyr-200, and Arg-315 contribute to the carboxy-S-adenosyl-L-methionine site; these read DPT and IE.

This sequence belongs to the class I-like SAM-binding methyltransferase superfamily. CmoB family. In terms of assembly, homotetramer.

The catalysed reaction is carboxy-S-adenosyl-L-methionine + 5-hydroxyuridine(34) in tRNA = 5-carboxymethoxyuridine(34) in tRNA + S-adenosyl-L-homocysteine + H(+). Its function is as follows. Catalyzes carboxymethyl transfer from carboxy-S-adenosyl-L-methionine (Cx-SAM) to 5-hydroxyuridine (ho5U) to form 5-carboxymethoxyuridine (cmo5U) at position 34 in tRNAs. This is tRNA U34 carboxymethyltransferase from Salmonella agona (strain SL483).